A 542-amino-acid chain; its full sequence is Chaperonin GroEL 2 (542 aa).

ATP is bound by residues Thr29–Pro32, Asp86–Thr90, Gly413, Asn477–Ala479, and Asp493.

It belongs to the chaperonin (HSP60) family. Forms a cylinder of 14 subunits composed of two heptameric rings stacked back-to-back. Interacts with the co-chaperonin GroES.

It localises to the cytoplasm. It carries out the reaction ATP + H2O + a folded polypeptide = ADP + phosphate + an unfolded polypeptide.. In terms of biological role, together with its co-chaperonin GroES, plays an essential role in assisting protein folding. The GroEL-GroES system forms a nano-cage that allows encapsulation of the non-native substrate proteins and provides a physical environment optimized to promote and accelerate protein folding. The polypeptide is Chaperonin GroEL 2 (Kineococcus radiotolerans (strain ATCC BAA-149 / DSM 14245 / SRS30216)).